Reading from the N-terminus, the 510-residue chain is NAD(P)H-quinone oxidoreductase subunit 2, chloroplastic (510 aa).

12 helical membrane passes run 24–44 (LLLFHGSFIFPECILIFGLIL), 59–79 (WFYFISSTSLVMSITALLFRW), 99–119 (IFQFLILLCSTLCIPLSVEYI), 124–144 (MAITEFLLFVLTATLGGMFLC), 149–169 (FITIFVAPECFSLCSYLLSGY), 183–203 (YLLMGGASSSILVHGFSWLYG), 229–249 (ISIALISITVGIGFKLSPAPF), 295–315 (WHLLLEILAILSMILGNLIAI), 323–343 (MLAYSSIGQIGYVIIGIIVGD), 347–367 (GYASMITYMLFYISMNLGTFA), 395–415 (ALSLALCLLSLGGLPPLAGFF), and 418–438 (LHLFWCGWQAGLYFLVSIGLL).

Belongs to the complex I subunit 2 family. As to quaternary structure, NDH is composed of at least 16 different subunits, 5 of which are encoded in the nucleus.

The protein resides in the plastid. The protein localises to the chloroplast thylakoid membrane. It carries out the reaction a plastoquinone + NADH + (n+1) H(+)(in) = a plastoquinol + NAD(+) + n H(+)(out). The catalysed reaction is a plastoquinone + NADPH + (n+1) H(+)(in) = a plastoquinol + NADP(+) + n H(+)(out). NDH shuttles electrons from NAD(P)H:plastoquinone, via FMN and iron-sulfur (Fe-S) centers, to quinones in the photosynthetic chain and possibly in a chloroplast respiratory chain. The immediate electron acceptor for the enzyme in this species is believed to be plastoquinone. Couples the redox reaction to proton translocation, and thus conserves the redox energy in a proton gradient. The sequence is that of NAD(P)H-quinone oxidoreductase subunit 2, chloroplastic from Phormium tenax (New Zealand flax).